The following is a 458-amino-acid chain: Maturase-like protein 1 (458 aa).

It to group II intron maturases.

It localises to the plastid. Its subcellular location is the chloroplast. Its function is as follows. Could be required for group III intron excision. The sequence is that of Maturase-like protein 1 (mat1) from Euglena gracilis.